Here is a 531-residue protein sequence, read N- to C-terminus: Apolipoprotein N-acyltransferase (531 aa).

The next 7 membrane-spanning stretches (helical) occupy residues Ile-8–Val-28, Phe-34–Val-54, Pro-69–Gly-89, Leu-105–Ala-125, Ile-136–Gly-156, Val-178–Ile-198, and Ala-206–Leu-226. Positions Val-243–Gly-493 constitute a CN hydrolase domain. Glu-287 acts as the Proton acceptor in catalysis. The active site involves Lys-351. The active-site Nucleophile is the Cys-405. The chain crosses the membrane as a helical span at residues Ile-507–Asn-527.

This sequence belongs to the CN hydrolase family. Apolipoprotein N-acyltransferase subfamily.

It localises to the cell inner membrane. It catalyses the reaction N-terminal S-1,2-diacyl-sn-glyceryl-L-cysteinyl-[lipoprotein] + a glycerophospholipid = N-acyl-S-1,2-diacyl-sn-glyceryl-L-cysteinyl-[lipoprotein] + a 2-acyl-sn-glycero-3-phospholipid + H(+). Its pathway is protein modification; lipoprotein biosynthesis (N-acyl transfer). Functionally, catalyzes the phospholipid dependent N-acylation of the N-terminal cysteine of apolipoprotein, the last step in lipoprotein maturation. In Rhizobium meliloti (strain 1021) (Ensifer meliloti), this protein is Apolipoprotein N-acyltransferase.